Reading from the N-terminus, the 137-residue chain is MGAFPSPPPWGWSTGFITTPLTTGRLPSQHLDPALPKLFWFTPTLPTCPTVAKQFWDTKRTSPDGNLKVANLPSFAISFATAPAALANCPPLPRVISMLCMAVPKGISVEVDSSFLSKNPFPNCTSFFQSIRLSRCI.

This sequence belongs to the ycf72 family.

Its subcellular location is the plastid. The protein resides in the chloroplast. This is an uncharacterized protein from Saccharum hybrid (Sugarcane).